Consider the following 301-residue polypeptide: MADQPKPISPLKNLLAGGFGGVCLVFVGHPLDTVKVRLQTQPPSLPGQPPMYSGTFDCFRKTLFREGITGLYRGMAAPIIGVTPMFAVCFFGFGLGKKLQQKHPEDVLSYPQLFAAGMLSGVFTTGIMTPGERIKCLLQIQASSGESKYTGTLDCAKKLYQEFGIRGIYKGTVLTLMRDVPASGMYFMTYEWLKNIFTPEGKRVSELSAPRILVAGGIAGIFNWAVAIPPDVLKSRFQTAPPGKYPNGFRDVLRELIRDEGVTSLYKGFNAVMIRAFPANAACFLGFEVAMKFLNWATPNL.

N-acetylalanine is present on Ala2. The Cytoplasmic portion of the chain corresponds to 2–12 (ADQPKPISPLK). Solcar repeat units lie at residues 8–99 (ISPL…GKKL), 108–196 (LSYP…LKNI), and 207–293 (LSAP…AMKF). The chain crosses the membrane as a helical span at residues 13-31 (NLLAGGFGGVCLVFVGHPL). Over 32 to 73 (DTVKVRLQTQPPSLPGQPPMYSGTFDCFRKTLFREGITGLYR) the chain is Mitochondrial matrix. A helical membrane pass occupies residues 74–93 (GMAAPIIGVTPMFAVCFFGF). At 94-112 (GLGKKLQQKHPEDVLSYPQ) the chain is on the cytoplasmic side. The chain crosses the membrane as a helical span at residues 113–131 (LFAAGMLSGVFTTGIMTPG). The Mitochondrial matrix segment spans residues 132-170 (ERIKCLLQIQASSGESKYTGTLDCAKKLYQEFGIRGIYK). 2 positions are modified to N6-acetyllysine: Lys148 and Lys157. The residue at position 170 (Lys170) is an N6-acetyllysine; alternate. Residue Lys170 is modified to N6-succinyllysine; alternate. The helical transmembrane segment at 171–190 (GTVLTLMRDVPASGMYFMTY) threads the bilayer. Over 191–211 (EWLKNIFTPEGKRVSELSAPR) the chain is Cytoplasmic. A helical transmembrane segment spans residues 212 to 230 (ILVAGGIAGIFNWAVAIPP). The Mitochondrial matrix portion of the chain corresponds to 231-267 (DVLKSRFQTAPPGKYPNGFRDVLRELIRDEGVTSLYK). The helical transmembrane segment at 268-287 (GFNAVMIRAFPANAACFLGF) threads the bilayer. The Cytoplasmic segment spans residues 288–301 (EVAMKFLNWATPNL).

Belongs to the mitochondrial carrier (TC 2.A.29) family.

It localises to the mitochondrion inner membrane. It carries out the reaction O-acetyl-(R)-carnitine(in) + (R)-carnitine(out) = O-acetyl-(R)-carnitine(out) + (R)-carnitine(in). The enzyme catalyses an O-acyl-(R)-carnitine(in) + (R)-carnitine(out) = an O-acyl-(R)-carnitine(out) + (R)-carnitine(in). The catalysed reaction is O-propanoyl-(R)-carnitine(in) + (R)-carnitine(out) = O-propanoyl-(R)-carnitine(out) + (R)-carnitine(in). It catalyses the reaction O-hexadecanoyl-(R)-carnitine(in) + (R)-carnitine(out) = O-hexadecanoyl-(R)-carnitine(out) + (R)-carnitine(in). It carries out the reaction O-octanoyl-(R)-carnitine(in) + (R)-carnitine(out) = O-octanoyl-(R)-carnitine(out) + (R)-carnitine(in). The enzyme catalyses (R)-carnitine(in) = (R)-carnitine(out). Functionally, mediates the electroneutral exchange of acylcarnitines (O-acyl-(R)-carnitine or L-acylcarnitine) of different acyl chain lengths (ranging from O-acetyl-(R)-carnitine to long-chain O-acyl-(R)-carnitines) with free carnitine ((R)-carnitine or L-carnitine) across the mitochondrial inner membrane, via a ping-pong mechanism. Key player in the mitochondrial oxidation pathway, it translocates the fatty acids in the form of acylcarnitines into the mitochondrial matrix, where the carnitine palmitoyltransferase 2 (CPT-2) activates them to undergo fatty acid beta-oxidation. Catalyzes the unidirectional transport (uniport) of carnitine at lower rates than the antiport (exchange). This is Mitochondrial carnitine/acylcarnitine carrier protein from Homo sapiens (Human).